The chain runs to 116 residues: Large ribosomal subunit protein uL18 (116 aa).

The protein belongs to the universal ribosomal protein uL18 family. Part of the 50S ribosomal subunit; part of the 5S rRNA/L5/L18/L25 subcomplex. Contacts the 5S and 23S rRNAs.

In terms of biological role, this is one of the proteins that bind and probably mediate the attachment of the 5S RNA into the large ribosomal subunit, where it forms part of the central protuberance. This Pseudomonas entomophila (strain L48) protein is Large ribosomal subunit protein uL18.